Here is a 138-residue protein sequence, read N- to C-terminus: Phosphoribosyl-AMP cyclohydrolase (138 aa).

Aspartate 84 contacts Mg(2+). Residue cysteine 85 participates in Zn(2+) binding. Positions 86 and 88 each coordinate Mg(2+). The Zn(2+) site is built by cysteine 102 and cysteine 109.

It belongs to the PRA-CH family. In terms of assembly, homodimer. Mg(2+) serves as cofactor. It depends on Zn(2+) as a cofactor.

The protein resides in the cytoplasm. It catalyses the reaction 1-(5-phospho-beta-D-ribosyl)-5'-AMP + H2O = 1-(5-phospho-beta-D-ribosyl)-5-[(5-phospho-beta-D-ribosylamino)methylideneamino]imidazole-4-carboxamide. It participates in amino-acid biosynthesis; L-histidine biosynthesis; L-histidine from 5-phospho-alpha-D-ribose 1-diphosphate: step 3/9. Functionally, catalyzes the hydrolysis of the adenine ring of phosphoribosyl-AMP. This chain is Phosphoribosyl-AMP cyclohydrolase, found in Burkholderia ambifaria (strain ATCC BAA-244 / DSM 16087 / CCUG 44356 / LMG 19182 / AMMD) (Burkholderia cepacia (strain AMMD)).